A 650-amino-acid polypeptide reads, in one-letter code: ATP-dependent DNA helicase PIF1 (650 aa).

Residues methionine 14–glutamine 192 form a PINT region. A phosphoserine mark is found at serine 40 and serine 164. Positions leucine 171–arginine 199 are disordered. Residue glycine 237 to serine 244 coordinates ATP. Residues glutamine 586–phenylalanine 605 mediate DNA binding. The interval leucine 631–leucine 650 is disordered. Acidic residues predominate over residues serine 633–leucine 650.

It belongs to the helicase family. PIF1 subfamily. As to quaternary structure, monomer. Interacts with telomerase. Requires Mg(2+) as cofactor.

Its subcellular location is the nucleus. It localises to the mitochondrion. The enzyme catalyses Couples ATP hydrolysis with the unwinding of duplex DNA at the replication fork by translocating in the 5'-3' direction. This creates two antiparallel DNA single strands (ssDNA). The leading ssDNA polymer is the template for DNA polymerase III holoenzyme which synthesizes a continuous strand.. It carries out the reaction ATP + H2O = ADP + phosphate + H(+). Its function is as follows. DNA-dependent ATPase and 5'-3' DNA helicase required for the maintenance of both mitochondrial and nuclear genome stability. Efficiently unwinds G-quadruplex (G4) DNA structures and forked RNA-DNA hybrids. Resolves G4 structures, preventing replication pausing and double-strand breaks (DSBs) at G4 motifs. Involved in the maintenance of telomeric DNA. Inhibits telomere elongation, de novo telomere formation and telomere addition to DSBs via catalytic inhibition of telomerase. Reduces the processivity of telomerase by displacing active telomerase from DNA ends. Releases telomerase by unwinding the short telomerase RNA/telomeric DNA hybrid that is the intermediate in the telomerase reaction. Possesses an intrinsic strand annealing activity. The polypeptide is ATP-dependent DNA helicase PIF1 (Mus musculus (Mouse)).